Consider the following 1043-residue polypeptide: Sarcoplasmic/endoplasmic reticulum calcium ATPase 2 (1043 aa).

Residues 1–48 lie on the Cytoplasmic side of the membrane; it reads MENAHTKTVEEVLGHFGVNESTGLSLEQVKKLKERWGSNELPAEEGKT. At S38 the chain carries Phosphoserine. A helical transmembrane segment spans residues 49-69; the sequence is LLELVIEQFEDLLVRILLLAA. Residues 70–89 lie on the Lumenal side of the membrane; the sequence is CISFVLAWFEEGEETITAFV. The helical transmembrane segment at 90–110 threads the bilayer; it reads EPFVILLILVANAIVGVWQER. Topologically, residues 111–253 are cytoplasmic; the sequence is NAENAIEALK…QERTPLQQKL (143 aa). A helical transmembrane segment spans residues 254–273; sequence DEFGEQLSKVISLICIAVWI. Residues 274-295 lie on the Lumenal side of the membrane; sequence INIGHFNDPVHGGSWIRGAIYY. A 3'-nitrotyrosine mark is found at Y294 and Y295. The chain crosses the membrane as a helical span at residues 296 to 313; that stretch reads FKIAVALAVAAIPEGLPA. Residues V304, A305, I307, and E309 each contribute to the Ca(2+) site. At 314–756 the chain is on the cytoplasmic side; the sequence is VITTCLALGT…EEGRAIYNNM (443 aa). The active-site 4-aspartylphosphate intermediate is D351. D351 and T353 together coordinate Mg(2+). Residue T353 coordinates ATP. The residue at position 441 (T441) is a Phosphothreonine. ATP contacts are provided by E442, R489, and K514. S531 carries the phosphoserine modification. R559 serves as a coordination point for ATP. The interval 575-594 is interaction with HAX1; that stretch reads MHLEDSANFIKYETNLTFVG. At S580 the chain carries Phosphoserine. ATP contacts are provided by T624, G625, and D626. A phosphoserine mark is found at S661 and S663. Positions 677 and 683 each coordinate ATP. D702 serves as a coordination point for Mg(2+). N705 contacts ATP. The helical transmembrane segment at 757-776 threads the bilayer; sequence KQFIRYLISSNVGEVVCIFL. Ca(2+) contacts are provided by N767 and E770. The Lumenal portion of the chain corresponds to 777–786; it reads TAALGFPEAL. Residues 787-807 form a helical membrane-spanning segment; that stretch reads IPVQLLWVNLVTDGLPATALG. The segment at 787-807 is interaction with PLN; the sequence is IPVQLLWVNLVTDGLPATALG. The interval 788 to 1043 is interaction with TMEM64 and PDIA3; the sequence is PVQLLWVNLV…DTNFSDMFWS (256 aa). The Ca(2+) site is built by N795, T798, and D799. Over 808-827 the chain is Cytoplasmic; the sequence is FNPPDLDIMNKPPRNPKEPL. The helical transmembrane segment at 828-850 threads the bilayer; that stretch reads ISGWLFFRYLAIGCYVGAATVGA. At 851 to 896 the chain is on the lumenal side; sequence AAWWFIAADGGPRVSFYQLSHFLQCKEDNPDFEGVDCAIFESPYPM. C875 and C887 are oxidised to a cystine. The helical transmembrane segment at 897–916 threads the bilayer; the sequence is TMALSVLVTIEMCNALNSLS. Position 907 (E907) interacts with Ca(2+). Residues 917 to 929 are Cytoplasmic-facing; sequence ENQSLLRMPPWEN. A helical membrane pass occupies residues 930-948; the sequence is IWLVGSICLSMSLHFLILY. The segment at 931–942 is interaction with PLN; that stretch reads WLVGSICLSMSL. Residues 949-963 are Lumenal-facing; it reads VEPLPLIFQITPLNL. The chain crosses the membrane as a helical span at residues 964–984; the sequence is TQWLMVLKISLPVILMDETLK. The Cytoplasmic segment spans residues 985–1043; the sequence is FVARNYLEPGKECAQPATKPSCSLSACTDGISWPFVLLIMPLVVWVYSTDTNFSDMFWS.

Belongs to the cation transport ATPase (P-type) (TC 3.A.3) family. Type IIA subfamily. Interacts with sarcolipin (SLN); the interaction inhibits ATP2A2 Ca(2+) affinity. Interacts with phospholamban (PLN); the interaction inhibits ATP2A2 Ca(2+) affinity. Interacts with myoregulin (MRLN). Interacts with ARLN and ERLN; the interactions inhibit ATP2A2 Ca(2+) affinity. Interacts with STRIT1/DWORF; the interaction results in activation of ATP2A2. Interacts with the monomeric forms of SLN, PLN, ARLN, ERLN and STRI1/DWORF. Interacts with HAX1. Interacts with S100A8 and S100A9. Interacts with SLC35G1 and STIM1. Interacts with TMEM203. Interacts with TMEM64 and PDIA3. Interacts with TMX1. Interacts with TMX2. Interacts with VMP1; VMP1 competes with PLN and SLN to prevent them from forming an inhibitory complex with ATP2A2. Interacts with ULK1. Interacts with S100A1 in a Ca(2+)-dependent manner. Interacts with TUNAR. Interacts with FLVCR2; this interaction occurs in the absence of heme and promotes ATP2A2 proteasomal degradation; this complex is dissociated upon heme binding. Interacts with FNIP1. As to quaternary structure, interacts with TRAM2 (via C-terminus). The cofactor is Mg(2+). Nitrated under oxidative stress. Nitration on the two tyrosine residues inhibits catalytic activity. In terms of processing, serotonylated on Gln residues by TGM2 in response to hypoxia, leading to its inactivation. As to expression, isoform 2 is highly expressed in heart and slow twitch skeletal muscle. Isoform 1 is widely expressed.

It localises to the endoplasmic reticulum membrane. It is found in the sarcoplasmic reticulum membrane. The enzyme catalyses Ca(2+)(in) + ATP + H2O = Ca(2+)(out) + ADP + phosphate + H(+). Its activity is regulated as follows. Has different conformational states with differential Ca2+ affinity. The E1 conformational state (active form) shows high Ca(2+) affinity, while the E2 state exhibits low Ca(2+) affinity. Binding of ATP allosterically increases its affinity for subsequent binding of Ca2+. Reversibly inhibited by phospholamban (PLN) at low calcium concentrations. PLN inhibits ATP2A2 Ca(2+) affinity by disrupting its allosteric activation by ATP. Inhibited by sarcolipin (SLN) and myoregulin (MRLN). The inhibition is blocked by VMP1. Enhanced by STRIT1/DWORF; STRIT1 increases activity by displacing sarcolipin (SLN), phospholamban (PLN) and myoregulin (MRLN). Stabilizes SERCA2 in its E2 state. In terms of biological role, this magnesium-dependent enzyme catalyzes the hydrolysis of ATP coupled with the translocation of calcium from the cytosol to the sarcoplasmic reticulum lumen. Involved in autophagy in response to starvation. Upon interaction with VMP1 and activation, controls ER-isolation membrane contacts for autophagosome formation. Also modulates ER contacts with lipid droplets, mitochondria and endosomes. In coordination with FLVCR2 mediates heme-stimulated switching from mitochondrial ATP synthesis to thermogenesis. Functionally, involved in the regulation of the contraction/relaxation cycle. Acts as a regulator of TNFSF11-mediated Ca(2+) signaling pathways via its interaction with TMEM64 which is critical for the TNFSF11-induced CREB1 activation and mitochondrial ROS generation necessary for proper osteoclast generation. Association between TMEM64 and SERCA2 in the ER leads to cytosolic Ca(2+) spiking for activation of NFATC1 and production of mitochondrial ROS, thereby triggering Ca(2+) signaling cascades that promote osteoclast differentiation and activation. This Rattus norvegicus (Rat) protein is Sarcoplasmic/endoplasmic reticulum calcium ATPase 2 (Atp2a2).